The sequence spans 152 residues: Acidic phospholipase A2 homolog textilotoxin D chain (152 aa).

The first 19 residues, 1–19, serve as a signal peptide directing secretion; sequence MHPAHLLVLLGVCVSLLGA. 7 disulfides stabilise this stretch: Cys38–Cys104, Cys54–Cys151, Cys56–Cys72, Cys71–Cys132, Cys78–Cys125, Cys88–Cys118, and Cys111–Cys123. A glycan (N-linked (GlcNAc...) asparagine) is linked at Asn112.

Belongs to the phospholipase A2 family. Group I subfamily. D49 sub-subfamily. In terms of assembly, heterohexamer. 2 forms exist: 2 A or 2 B chains, 2 C chains and 2 covalently-linked D chains, and 1 A or 1 B, 1 C, 2 covalently-linked D chains and 2 differentially glycosylated covalently-linked D chains. Textilotoxin was originally described as pentameric. As to expression, expressed by the venom gland.

It is found in the secreted. In terms of biological role, snake venom oligomeric phospholipase A2 that has potent presynaptic neurotoxicity. Chain D is not itself neurotoxic, but it is essential for the neurotoxicity of textilotoxin. Chain D possesses a very low phospholipase activity. The sequence is that of Acidic phospholipase A2 homolog textilotoxin D chain from Pseudonaja textilis (Eastern brown snake).